Consider the following 126-residue polypeptide: Lymphocyte antigen 6 complex locus protein G6c (126 aa).

The signal sequence occupies residues 1 to 19; that stretch reads MKHLLLLTLSALLYCWVSA. One can recognise a UPAR/Ly6 domain in the interval 21–112; the sequence is TRCHSCYKVP…PRPTPALALI (92 aa). 3 cysteine pairs are disulfide-bonded: C23–C48, C26–C34, and C40–C66. N89 carries an N-linked (GlcNAc...) (high mannose) asparagine glycan. C93 and C98 form a disulfide bridge. S100 carries the GPI-anchor amidated serine lipid modification. Residues 101-126 constitute a propeptide, removed in mature form; sequence PAPRPTPALALISLTSLAGLGLWLLH.

Monomer. In terms of processing, N-glycosylated. In terms of tissue distribution, highly expressed at the leading edges of cells, on filopodia.

The protein resides in the cell membrane. This is Lymphocyte antigen 6 complex locus protein G6c (Ly6g6c) from Mus musculus (Mouse).